A 484-amino-acid polypeptide reads, in one-letter code: Ribosome biogenesis protein NOP53 (484 aa).

Disordered regions lie at residues Met1 to Leu51 and Glu304 to Lys356. Ala2 is subject to N-acetylalanine. At Ser29 the chain carries Phosphoserine. The segment covering Arg35–Arg49 has biased composition (basic residues). The segment at Lys148–Leu437 is mediates interaction with CDKN2A/isoform tumor suppressor ARF. The residue at position 305 (Ser305) is a Phosphoserine. Positions Pro336–Arg348 are enriched in basic and acidic residues. The interval Arg348–Ala392 is mediates interaction with human herpesvirus 8 protein ORF16. Nucleolar localization signal regions lie at residues Ala353–Arg401 and Arg402–Leu484.

This sequence belongs to the NOP53 family. As to quaternary structure, homooligomer. Interacts with PTEN; regulates PTEN phosphorylation and increases its stability. Interacts with RPL11; retains RPL11 into the nucleolus. Interacts with CDKN2A/isoform tumor suppressor ARF; the interaction is direct and promotes ARF nucleoplasmic relocalization and ubiquitin-mediated proteasomal degradation. Interacts with NPM1; the interaction is direct and competitive with MYC. Interacts with NF2 (via FERM domain); the interaction is direct. Interacts with p53/TP53 (via the oligomerization region); the interaction is direct and may prevent the MDM2-mediated proteasomal degradation of p53/TP53. Interacts with RIGI; may regulate RIGI through USP15-mediated 'Lys-63'-linked deubiquitination. Interacts with UBTF. In terms of processing, ubiquitin-mediated proteasomal degradation is regulated by c-JUN. It is associated with relocalization to the nucleoplasm and decreased homooligomerization. Phosphorylated upon DNA damage probably by ATM and DNA-PK; may regulate NOP53 degradation.

It is found in the nucleus. The protein resides in the nucleolus. It localises to the nucleoplasm. Its function is as follows. Nucleolar protein which is involved in the integration of the 5S RNP into the ribosomal large subunit during ribosome biogenesis. In ribosome biogenesis, may also play a role in rRNA transcription. Also functions as a nucleolar sensor that regulates the activation of p53/TP53 in response to ribosome biogenesis perturbation, DNA damage and other stress conditions. DNA damage or perturbation of ribosome biogenesis disrupt the interaction between NOP53 and RPL11 allowing RPL11 transport to the nucleoplasm where it can inhibit MDM2 and allow p53/TP53 activation. It may also positively regulate the function of p53/TP53 in cell cycle arrest and apoptosis through direct interaction, preventing its MDM2-dependent ubiquitin-mediated proteasomal degradation. Originally identified as a tumor suppressor, it may also play a role in cell proliferation and apoptosis by positively regulating the stability of PTEN, thereby antagonizing the PI3K-AKT/PKB signaling pathway. May also inhibit cell proliferation and increase apoptosis through its interaction with NF2. May negatively regulate NPM1 by regulating its nucleoplasmic localization, oligomerization and ubiquitin-mediated proteasomal degradation. Thereby, may prevent NPM1 interaction with MYC and negatively regulate transcription mediated by the MYC-NPM1 complex. May also regulate cellular aerobic respiration. In the cellular response to viral infection, may play a role in the attenuation of interferon-beta through the inhibition of RIGI. The polypeptide is Ribosome biogenesis protein NOP53 (Mus musculus (Mouse)).